The chain runs to 264 residues: Glutamate 5-kinase (264 aa).

K15 serves as a coordination point for ATP. Residues S55, D142, and N154 each coordinate substrate. Residues S174–D175 and T216–K222 contribute to the ATP site.

Belongs to the glutamate 5-kinase family.

The protein localises to the cytoplasm. The enzyme catalyses L-glutamate + ATP = L-glutamyl 5-phosphate + ADP. Its pathway is amino-acid biosynthesis; L-proline biosynthesis; L-glutamate 5-semialdehyde from L-glutamate: step 1/2. Functionally, catalyzes the transfer of a phosphate group to glutamate to form L-glutamate 5-phosphate. In Alkaliphilus metalliredigens (strain QYMF), this protein is Glutamate 5-kinase.